The chain runs to 156 residues: 6,7-dimethyl-8-ribityllumazine synthase (156 aa).

Residues Phe23, Ser57–Glu59, and Ala81–Ile83 contribute to the 5-amino-6-(D-ribitylamino)uracil site. Gly86–Thr87 lines the (2S)-2-hydroxy-3-oxobutyl phosphate pocket. His89 (proton donor) is an active-site residue. Phe114 lines the 5-amino-6-(D-ribitylamino)uracil pocket. Residue Arg128 participates in (2S)-2-hydroxy-3-oxobutyl phosphate binding.

It belongs to the DMRL synthase family. In terms of assembly, forms an icosahedral capsid composed of 60 subunits, arranged as a dodecamer of pentamers.

It carries out the reaction (2S)-2-hydroxy-3-oxobutyl phosphate + 5-amino-6-(D-ribitylamino)uracil = 6,7-dimethyl-8-(1-D-ribityl)lumazine + phosphate + 2 H2O + H(+). Its pathway is cofactor biosynthesis; riboflavin biosynthesis; riboflavin from 2-hydroxy-3-oxobutyl phosphate and 5-amino-6-(D-ribitylamino)uracil: step 1/2. Catalyzes the formation of 6,7-dimethyl-8-ribityllumazine by condensation of 5-amino-6-(D-ribitylamino)uracil with 3,4-dihydroxy-2-butanone 4-phosphate. This is the penultimate step in the biosynthesis of riboflavin. The protein is 6,7-dimethyl-8-ribityllumazine synthase of Alkalilimnicola ehrlichii (strain ATCC BAA-1101 / DSM 17681 / MLHE-1).